The sequence spans 319 residues: MTDAPGFPLFPHPHLLGIKGLSPADIELLLERADAAVAISRRPEKKLATLRGRTQINLFFEASTRTQSSFELAGKRLGADVMNMSVASSSTKKGETLLDTAMTLNAMRPDILVVRHSAAGAAALLAQKVGCSVVNAGDGAHEHPTQALLDALTIRRKKGSIAGLVVAICGDVLHSRVARSNILLLNALGARVRVIAPSTLLPSGIGQMGVEPFTKMGEGLAGADVVMMLRLQRERMAGTFVPSVREYFRFFGLDAEKLKAAKEDALVMHPGPMNRGVEIASEVADGPQSVIQEQVEMGVAVRMAVMEALLDPRRNGDGA.

The carbamoyl phosphate site is built by Arg-65 and Thr-66. Position 93 (Lys-93) interacts with L-aspartate. Positions 115, 143, and 146 each coordinate carbamoyl phosphate. L-aspartate is bound by residues Arg-176 and Arg-230. Residues Gly-271 and Pro-272 each contribute to the carbamoyl phosphate site.

This sequence belongs to the aspartate/ornithine carbamoyltransferase superfamily. ATCase family. In terms of assembly, heterododecamer (2C3:3R2) of six catalytic PyrB chains organized as two trimers (C3), and six regulatory PyrI chains organized as three dimers (R2).

The catalysed reaction is carbamoyl phosphate + L-aspartate = N-carbamoyl-L-aspartate + phosphate + H(+). Its pathway is pyrimidine metabolism; UMP biosynthesis via de novo pathway; (S)-dihydroorotate from bicarbonate: step 2/3. Its function is as follows. Catalyzes the condensation of carbamoyl phosphate and aspartate to form carbamoyl aspartate and inorganic phosphate, the committed step in the de novo pyrimidine nucleotide biosynthesis pathway. In Chelativorans sp. (strain BNC1), this protein is Aspartate carbamoyltransferase catalytic subunit.